Consider the following 492-residue polypeptide: Protein nucleotidyltransferase YdiU (492 aa).

ATP contacts are provided by Gly-88, Gly-90, Arg-91, Lys-111, Asp-123, Gly-124, Arg-174, and Arg-181. The Proton acceptor role is filled by Asp-250. Mg(2+) contacts are provided by Asn-251 and Asp-260. Residue Asp-260 participates in ATP binding.

It belongs to the SELO family. Requires Mg(2+) as cofactor. It depends on Mn(2+) as a cofactor.

The enzyme catalyses L-seryl-[protein] + ATP = 3-O-(5'-adenylyl)-L-seryl-[protein] + diphosphate. The catalysed reaction is L-threonyl-[protein] + ATP = 3-O-(5'-adenylyl)-L-threonyl-[protein] + diphosphate. It catalyses the reaction L-tyrosyl-[protein] + ATP = O-(5'-adenylyl)-L-tyrosyl-[protein] + diphosphate. It carries out the reaction L-histidyl-[protein] + UTP = N(tele)-(5'-uridylyl)-L-histidyl-[protein] + diphosphate. The enzyme catalyses L-seryl-[protein] + UTP = O-(5'-uridylyl)-L-seryl-[protein] + diphosphate. The catalysed reaction is L-tyrosyl-[protein] + UTP = O-(5'-uridylyl)-L-tyrosyl-[protein] + diphosphate. Its function is as follows. Nucleotidyltransferase involved in the post-translational modification of proteins. It can catalyze the addition of adenosine monophosphate (AMP) or uridine monophosphate (UMP) to a protein, resulting in modifications known as AMPylation and UMPylation. In Rhodopseudomonas palustris (strain TIE-1), this protein is Protein nucleotidyltransferase YdiU.